The sequence spans 163 residues: Ribonuclease P protein subunit p25-like protein (163 aa).

Disordered regions lie at residues 1–24 (MEQY…LPPD) and 126–163 (LDPS…DTRS). Over residues 153–163 (RPRRRARDTRS) the composition is skewed to basic residues.

The protein belongs to the histone-like Alba family.

It is found in the nucleus. Its function is as follows. May be a component of ribonuclease P or MRP. The sequence is that of Ribonuclease P protein subunit p25-like protein (Rpp25l) from Mus musculus (Mouse).